Consider the following 525-residue polypeptide: Peptide chain release factor 3 (525 aa).

Residues 8 to 276 (AMRRTFAIIS…AFVKEAPPPQ (269 aa)) enclose the tr-type G domain. Residues 17 to 24 (SHPDAGKT), 85 to 89 (DTPGH), and 139 to 142 (NKMD) contribute to the GTP site.

Belongs to the TRAFAC class translation factor GTPase superfamily. Classic translation factor GTPase family. PrfC subfamily.

Its subcellular location is the cytoplasm. In terms of biological role, increases the formation of ribosomal termination complexes and stimulates activities of RF-1 and RF-2. It binds guanine nucleotides and has strong preference for UGA stop codons. It may interact directly with the ribosome. The stimulation of RF-1 and RF-2 is significantly reduced by GTP and GDP, but not by GMP. This Coxiella burnetii (strain RSA 331 / Henzerling II) protein is Peptide chain release factor 3.